Reading from the N-terminus, the 138-residue chain is Cell division protein SepF (138 aa).

It belongs to the SepF family. Homodimer. Interacts with FtsZ.

The protein resides in the cytoplasm. Functionally, cell division protein that is part of the divisome complex and is recruited early to the Z-ring. Probably stimulates Z-ring formation, perhaps through the cross-linking of FtsZ protofilaments. Its function overlaps with FtsA. The polypeptide is Cell division protein SepF (Limosilactobacillus reuteri (strain DSM 20016) (Lactobacillus reuteri)).